Consider the following 96-residue polypeptide: MKTLRLNNVTLEMAAYQEESEPKRKIAFTLNVTSETYHDIAVLLYEKTFNVEVPERDLAFRGEMTNYSTSLTNLYEPGAVSEFYIEITEIDKNADS.

This is an uncharacterized protein from Bacillus subtilis (strain 168).